A 311-amino-acid chain; its full sequence is Putative S-adenosyl-L-methionine-dependent methyltransferase MSMEG_0095/MSMEI_0092 (311 aa).

Residues Asp134 and 163–164 (DL) contribute to the S-adenosyl-L-methionine site.

Belongs to the UPF0677 family.

In terms of biological role, exhibits S-adenosyl-L-methionine-dependent methyltransferase activity. The chain is Putative S-adenosyl-L-methionine-dependent methyltransferase MSMEG_0095/MSMEI_0092 from Mycolicibacterium smegmatis (strain ATCC 700084 / mc(2)155) (Mycobacterium smegmatis).